The sequence spans 691 residues: DNA ligase (691 aa).

The segment at 1–22 is disordered; sequence MTTAEDVAGNPYISDPRTDFES. Residues 59-63, 107-108, and glutamate 137 each bind NAD(+); these read DRAYD and SI. The active-site N6-AMP-lysine intermediate is lysine 139. NAD(+)-binding residues include arginine 160, glutamate 196, lysine 311, and lysine 335. Zn(2+) contacts are provided by cysteine 426, cysteine 429, cysteine 442, and cysteine 448. The 84-residue stretch at 608–691 folds into the BRCT domain; it reads TDGDALDGQT…EELLDDAGVL (84 aa). The tract at residues 637–667 is disordered; that stretch reads ERNDGSATSSVSGNTDYLVLGDNPGQRKQDD. The segment covering 641–651 has biased composition (polar residues); that stretch reads GSATSSVSGNT.

This sequence belongs to the NAD-dependent DNA ligase family. LigA subfamily. It depends on Mg(2+) as a cofactor. Requires Mn(2+) as cofactor.

It catalyses the reaction NAD(+) + (deoxyribonucleotide)n-3'-hydroxyl + 5'-phospho-(deoxyribonucleotide)m = (deoxyribonucleotide)n+m + AMP + beta-nicotinamide D-nucleotide.. DNA ligase that catalyzes the formation of phosphodiester linkages between 5'-phosphoryl and 3'-hydroxyl groups in double-stranded DNA using NAD as a coenzyme and as the energy source for the reaction. It is essential for DNA replication and repair of damaged DNA. The protein is DNA ligase of Haloarcula marismortui (strain ATCC 43049 / DSM 3752 / JCM 8966 / VKM B-1809) (Halobacterium marismortui).